A 293-amino-acid polypeptide reads, in one-letter code: Ribosomal protein L11 methyltransferase (293 aa).

T145, G166, D188, and N230 together coordinate S-adenosyl-L-methionine.

The protein belongs to the methyltransferase superfamily. PrmA family.

Its subcellular location is the cytoplasm. The enzyme catalyses L-lysyl-[protein] + 3 S-adenosyl-L-methionine = N(6),N(6),N(6)-trimethyl-L-lysyl-[protein] + 3 S-adenosyl-L-homocysteine + 3 H(+). In terms of biological role, methylates ribosomal protein L11. This Actinobacillus pleuropneumoniae serotype 7 (strain AP76) protein is Ribosomal protein L11 methyltransferase.